A 1216-amino-acid chain; its full sequence is Probable cation-transporting ATPase 13A5 (1216 aa).

Transmembrane regions (helical) follow at residues 33 to 53 (RALC…MFYW), 198 to 218 (LLVK…LTLW), 222 to 242 (GYIE…VLSV), 401 to 421 (FMVF…GVYM), and 433 to 453 (MALI…LTIG). Asp-486 acts as the 4-aspartylphosphate intermediate in catalysis. N-linked (GlcNAc...) asparagine glycosylation is found at Asn-650 and Asn-817. The Mg(2+) site is built by Asp-848 and Asp-852. 6 helical membrane-spanning segments follow: residues 896–916 (ALVS…IQFI), 933–950 (YLLQ…TMSI), 971–991 (LLLS…CTFL), 1040–1060 (FEGT…AFIF), 1075–1095 (LFSL…FCDF), and 1113–1133 (VSIL…EDAV).

The protein belongs to the cation transport ATPase (P-type) (TC 3.A.3) family. Type V subfamily. In terms of tissue distribution, specifically expressed in brain and stomach.

It localises to the membrane. It catalyses the reaction ATP + H2O = ADP + phosphate + H(+). The protein is Probable cation-transporting ATPase 13A5 (Atp13a5) of Mus musculus (Mouse).